The chain runs to 170 residues: Putative 4-hydroxy-4-methyl-2-oxoglutarate aldolase (170 aa).

Substrate-binding positions include 81–84 (GDII) and R103. Residue D104 coordinates a divalent metal cation.

This sequence belongs to the class II aldolase/RraA-like family. As to quaternary structure, homotrimer. A divalent metal cation is required as a cofactor.

It catalyses the reaction 4-hydroxy-4-methyl-2-oxoglutarate = 2 pyruvate. It carries out the reaction oxaloacetate + H(+) = pyruvate + CO2. Its function is as follows. Catalyzes the aldol cleavage of 4-hydroxy-4-methyl-2-oxoglutarate (HMG) into 2 molecules of pyruvate. Also contains a secondary oxaloacetate (OAA) decarboxylase activity due to the common pyruvate enolate transition state formed following C-C bond cleavage in the retro-aldol and decarboxylation reactions. The polypeptide is Putative 4-hydroxy-4-methyl-2-oxoglutarate aldolase (Corynebacterium efficiens (strain DSM 44549 / YS-314 / AJ 12310 / JCM 11189 / NBRC 100395)).